Consider the following 208-residue polypeptide: Interleukin-6 (208 aa).

The first 29 residues, 1–29, serve as a signal peptide directing secretion; sequence MNSLFTSAFSPLAVSLGLLLVMTSAFPTP. N-linked (GlcNAc...) asparagine glycosylation is present at Asn-38. The cysteines at positions 72 and 78 are disulfide-linked. Ser-81 carries the phosphoserine modification. Cysteines 101 and 111 form a disulfide.

The protein belongs to the IL-6 superfamily. In terms of assembly, component of a hexamer of two molecules each of IL6, IL6R and IL6ST; first binds to IL6R to associate with the signaling subunit IL6ST. Interacts with IL6R (via the N-terminal ectodomain); this interaction may be affected by IL6R-binding with SORL1, hence decreasing IL6 cis signaling. Interacts with SORL1 (via the N-terminal ectodomain); this interaction leads to IL6 internalization and lysosomal degradation. May form a trimeric complex with the soluble SORL1 ectodomain and soluble IL6R receptor; this interaction might stabilize circulating IL6, hence promoting IL6 trans signaling.

The protein resides in the secreted. Cytokine with a wide variety of biological functions in immunity, tissue regeneration, and metabolism. Binds to IL6R, then the complex associates to the signaling subunit IL6ST/gp130 to trigger the intracellular IL6-signaling pathway. The interaction with the membrane-bound IL6R and IL6ST stimulates 'classic signaling', whereas the binding of IL6 and soluble IL6R to IL6ST stimulates 'trans-signaling'. Alternatively, 'cluster signaling' occurs when membrane-bound IL6:IL6R complexes on transmitter cells activate IL6ST receptors on neighboring receiver cells. Its function is as follows. IL6 is a potent inducer of the acute phase response. Rapid production of IL6 contributes to host defense during infection and tissue injury, but excessive IL6 synthesis is involved in disease pathology. In the innate immune response, is synthesized by myeloid cells, such as macrophages and dendritic cells, upon recognition of pathogens through toll-like receptors (TLRs) at the site of infection or tissue injury. In the adaptive immune response, is required for the differentiation of B cells into immunoglobulin-secreting cells. Plays a major role in the differentiation of CD4(+) T cell subsets. Essential factor for the development of T follicular helper (Tfh) cells that are required for the induction of germinal-center formation. Required to drive naive CD4(+) T cells to the Th17 lineage. Also required for proliferation of myeloma cells and the survival of plasmablast cells. In terms of biological role, acts as an essential factor in bone homeostasis and on vessels directly or indirectly by induction of VEGF, resulting in increased angiogenesis activity and vascular permeability. Induces, through 'trans-signaling' and synergistically with IL1B and TNF, the production of VEGF. Involved in metabolic controls, is discharged into the bloodstream after muscle contraction increasing lipolysis and improving insulin resistance. 'Trans-signaling' in central nervous system also regulates energy and glucose homeostasis. Mediates, through GLP-1, crosstalk between insulin-sensitive tissues, intestinal L cells and pancreatic islets to adapt to changes in insulin demand. Also acts as a myokine. Plays a protective role during liver injury, being required for maintenance of tissue regeneration. Also has a pivotal role in iron metabolism by regulating HAMP/hepcidin expression upon inflammation or bacterial infection. Through activation of IL6ST-YAP-NOTCH pathway, induces inflammation-induced epithelial regeneration. The protein is Interleukin-6 (IL6) of Capra hircus (Goat).